A 5430-amino-acid chain; its full sequence is Microtubule-actin cross-linking factor 1 (5430 aa).

A disordered region spans residues 1–47; that stretch reads MSSSDEETLSERSCRSERSCRSERSYRSERSGSLSPCPPGDTLPWNL. The actin-binding stretch occupies residues 1–295; that stretch reads MSSSDEETLS…VITYVSSIYD (295 aa). S4 bears the Phosphoserine mark. Basic and acidic residues predominate over residues 9–30; it reads LSERSCRSERSCRSERSYRSER. S35 and S57 each carry phosphoserine. 2 Calponin-homology (CH) domains span residues 78 to 181 and 194 to 298; these read RVQK…LHFQ and MSAK…DAFP. LRR repeat units follow at residues 148–171 and 240–264; these read QRQV…LTLG and LVDM…VAER. Phosphoserine is present on S280. 2 LRR repeats span residues 377–399 and 441–464; these read LYKL…YHPN and LNCE…LESG. In terms of domain architecture, SH3 spans 868 to 925; that stretch reads KSTLSVKAICDYRQIEITICKNDECVLEDNSQRTKWKVISPTGNEAMVPSVCLLIPPP. The LRR 5 repeat unit spans residues 1050–1073; the sequence is ISELKNIRLRLEECEQRLLKQIQS. S1122 carries the post-translational modification Phosphoserine. LRR repeat units lie at residues 1128–1154, 1187–1210, and 1257–1282; these read ATTL…VCLN, PADL…VKDK, and HRVI…DYRA. Phosphoserine occurs at positions 1367 and 1376. 2 LRR repeats span residues 1579–1602 and 1629–1653; these read QQEL…IQNH and LTAL…TREA. Spectrin repeat units follow at residues 1816-1891 and 1933-2041; these read ELQK…NFEE and QYQQ…ALLQ. Phosphoserine is present on S1860. One copy of the LRR 11 repeat lies at 1869–1891; it reads KGDLRFVTISGQKVLETENNFEE. 2 LRR repeats span residues 2058 to 2083 and 2194 to 2220; these read LQSM…LIQE and IQEL…ALGS. The Spectrin 3 repeat unit spans residues 2399-2507; the sequence is RMEEVQKEAS…TVARQKQLEE (109 aa). Phosphoserine occurs at positions 2429 and 2454. 3 LRR repeats span residues 2444-2467, 2534-2557, and 2702-2725; these read KAFL…LAGL, GVLG…QFML, and KKRL…RMNR. 2 Spectrin repeats span residues 2733-2837 and 2842-2945; these read TQQF…SRLK and KAQK…SLEE. Phosphoserine occurs at positions 2769 and 2895. LRR repeat units lie at residues 2984-3009, 3105-3127, and 3214-3237; these read NKNL…YLRD, NKIQ…MLEE, and KEQV…LIQS. Spectrin repeat units lie at residues 3169–3274, 3281–3383, 3388–3491, 3714–3818, 3825–3927, 4047–4152, 4157–4261, 4267–4370, 4375–4481, 4486–4589, 4594–4700, 4707–4808, and 4812–4916; these read EDFY…QLQE, KFQD…QLED, AKQF…SLLE, RSQQ…ARLE, NQFW…ALDE, LAEK…KLED, AVQY…HKLE, LGQF…QQLQ, QAQG…KLEE, ATEF…RSLD, RAKQ…KLEE, QFMD…RLEQ, and QAEE…QRLE. A Phosphothreonine modification is found at T3368. LRR repeat units follow at residues 3737–3761 and 3846–3870; these read MALG…AFSI and AQLP…QLRE. A Phosphoserine modification is found at S4074. Residue K4252 is modified to N6-acetyllysine. An LRR 22 repeat occupies 4538–4561; it reads RDQIIELDQTGNQLKFLSQKQDVV. Residues 4993-5023 are disordered; it reads PTHAPFIEKSRSGSRKSLNQPTPPPMPILSQ. S5009 is subject to Phosphoserine. EF-hand domains follow at residues 5083–5118 and 5119–5154; these read HKKS…SKFP and TTKL…NKDA. Ca(2+) is bound by residues D5096, D5098, D5100, K5102, E5107, D5132, D5134, D5136, Y5138, and E5143. Residues 5159-5231 enclose the GAR domain; that stretch reads TDADKIEDEV…EFLVKNDPCR (73 aa). Positions 5159-5430 are C-terminal tail; that stretch reads TDADKIEDEV…ASPRTPCPKR (272 aa). The interval 5247–5430 is disordered; the sequence is PEGASQGMTP…ASPRTPCPKR (184 aa). The span at 5267–5301 shows a compositional bias: low complexity; the sequence is SSRAASPTRSSSSASQSNHSCTSMPSSPATPASGT. Phosphothreonine is present on T5296. The segment covering 5317 to 5341 has biased composition (polar residues); it reads TFHSSRTSLAGDTSNSSSPASTGAK. S5321 and S5334 each carry phosphoserine. The segment covering 5352–5366 has biased composition (low complexity); it reads SRPGSRAGSRAGSRA. Positions 5355 to 5370 are 4 X 4 AA tandem repeats of [GS]-S-R-[AR]; that stretch reads GSRAGSRAGSRASSRR. Residues S5372 and S5375 each carry the phosphoserine modification. Residues 5381 to 5391 are compositionally biased toward polar residues; sequence ETQSACSDTSE. Over residues 5392 to 5403 the composition is skewed to low complexity; sequence SSAAGGQGSSRR.

This sequence belongs to the plakin or cytolinker family. In terms of assembly, interacts with MAPRE1, CLASP1, CLASP2 and GOLGA4. Interacts with AXIN1 and LRP6. Found in a complex composed of MACF1, APC; AXIN1, CTNNB1 and GSK3B. Interacts with CAMSAP3. In terms of processing, phosphorylated on serine residues in the C-terminal tail by GSK3B. Phosphorylation inhibits microtubule-binding and this plays a critical role in bulge stem cell migration and skin wound repair. Wnt-signaling can repress phosphorylation.

It is found in the cytoplasm. The protein resides in the cytoskeleton. It localises to the golgi apparatus. Its subcellular location is the cell membrane. The protein localises to the cell projection. It is found in the ruffle membrane. The protein resides in the membrane. Its function is as follows. F-actin-binding protein which plays a role in cross-linking actin to other cytoskeletal proteins and also binds to microtubules. Plays an important role in ERBB2-dependent stabilization of microtubules at the cell cortex. Acts as a positive regulator of Wnt receptor signaling pathway and is involved in the translocation of AXIN1 and its associated complex (composed of APC, CTNNB1 and GSK3B) from the cytoplasm to the cell membrane. Has actin-regulated ATPase activity and is essential for controlling focal adhesions (FAs) assembly and dynamics. Interaction with CAMSAP3 at the minus ends of non-centrosomal microtubules tethers microtubules minus-ends to actin filaments, regulating focal adhesion size and cell migration. May play role in delivery of transport vesicles containing GPI-linked proteins from the trans-Golgi network through its interaction with GOLGA4. Plays a key role in wound healing and epidermal cell migration. Required for efficient upward migration of bulge cells in response to wounding and this function is primarily rooted in its ability to coordinate microtubule dynamics and polarize hair follicle stem cells. As a regulator of actin and microtubule arrangement and stabilization, it plays an essential role in neurite outgrowth, branching and spine formation during brain development. This is Microtubule-actin cross-linking factor 1 from Rattus norvegicus (Rat).